Here is a 692-residue protein sequence, read N- to C-terminus: Elongation factor G (692 aa).

The tr-type G domain maps to 9 to 284 (EKIRNIGIMA…AVVDYLPSPV (276 aa)). GTP is bound by residues 18 to 25 (AHIDAGKT), 82 to 86 (DTPGH), and 136 to 139 (NKMD).

This sequence belongs to the TRAFAC class translation factor GTPase superfamily. Classic translation factor GTPase family. EF-G/EF-2 subfamily.

Its subcellular location is the cytoplasm. Catalyzes the GTP-dependent ribosomal translocation step during translation elongation. During this step, the ribosome changes from the pre-translocational (PRE) to the post-translocational (POST) state as the newly formed A-site-bound peptidyl-tRNA and P-site-bound deacylated tRNA move to the P and E sites, respectively. Catalyzes the coordinated movement of the two tRNA molecules, the mRNA and conformational changes in the ribosome. The polypeptide is Elongation factor G (Neorickettsia sennetsu (strain ATCC VR-367 / Miyayama) (Ehrlichia sennetsu)).